Here is a 120-residue protein sequence, read N- to C-terminus: MSKAKVTNARRKRSVRLKLRRSGGGRPRLSVFRSSKHIYAQVIDDLKGETLASASSLEKSMRDGGKTGADIDAAKAVGKLLAERAAEKGVKEVVFDRGSYLYHGRVKALADAARESGLSF.

Residues 1 to 26 (MSKAKVTNARRKRSVRLKLRRSGGGR) form a disordered region. A compositionally biased stretch (basic residues) spans 8-23 (NARRKRSVRLKLRRSG).

Belongs to the universal ribosomal protein uL18 family. In terms of assembly, part of the 50S ribosomal subunit; part of the 5S rRNA/L5/L18/L25 subcomplex. Contacts the 5S and 23S rRNAs.

Functionally, this is one of the proteins that bind and probably mediate the attachment of the 5S RNA into the large ribosomal subunit, where it forms part of the central protuberance. The chain is Large ribosomal subunit protein uL18 from Bradyrhizobium diazoefficiens (strain JCM 10833 / BCRC 13528 / IAM 13628 / NBRC 14792 / USDA 110).